A 453-amino-acid chain; its full sequence is Putative dipeptidase UREG_03382 (453 aa).

Residues methionine 1 to arginine 33 form a disordered region. A helical transmembrane segment spans residues leucine 41 to serine 63. Zn(2+) contacts are provided by histidine 95, aspartate 97, and glutamate 208. A disulfide bridge links cysteine 147 with cysteine 223. Residue histidine 221 participates in substrate binding. 2 residues coordinate Zn(2+): histidine 265 and histidine 286. Residues arginine 297 and aspartate 357 each contribute to the substrate site. Residues asparagine 370 and asparagine 443 are each glycosylated (N-linked (GlcNAc...) asparagine).

This sequence belongs to the metallo-dependent hydrolases superfamily. Peptidase M19 family. Requires Zn(2+) as cofactor.

It is found in the membrane. The enzyme catalyses an L-aminoacyl-L-amino acid + H2O = 2 an L-alpha-amino acid. Hydrolyzes a wide range of dipeptides. This Uncinocarpus reesii (strain UAMH 1704) protein is Putative dipeptidase UREG_03382.